Here is a 311-residue protein sequence, read N- to C-terminus: Solute carrier family 25 member 36-A (311 aa).

3 Solcar repeats span residues 4–108 (RDTL…SKEK), 116–203 (DSTQ…IKRK), and 224–308 (SDFV…VVYL). The next 6 membrane-spanning stretches (helical) occupy residues 7–27 (LVHL…TCPL), 41–57 (FYIS…ASVA), 111–131 (NVFD…AGFT), 180–200 (MSAS…YESI), 226–246 (FVGM…IAYP), and 291–311 (QIPN…LLNG).

It belongs to the mitochondrial carrier (TC 2.A.29) family.

The protein resides in the mitochondrion inner membrane. This Danio rerio (Zebrafish) protein is Solute carrier family 25 member 36-A (slc25a36a).